The sequence spans 294 residues: Proline iminopeptidase (294 aa).

One can recognise an AB hydrolase-1 domain in the interval 27–277; that stretch reads PPLVLLHGGP…GCGHMSFVEK (251 aa). S105 serves as the catalytic Nucleophile. Residue D244 is part of the active site. H271 functions as the Proton donor in the catalytic mechanism.

This sequence belongs to the peptidase S33 family.

The protein resides in the cell envelope. The enzyme catalyses Release of N-terminal proline from a peptide.. In terms of biological role, releases the N-terminal proline from various substrates. The protein is Proline iminopeptidase of Lactobacillus helveticus (strain DPC 4571).